The sequence spans 233 residues: 2-C-methyl-D-erythritol 4-phosphate cytidylyltransferase (233 aa).

It belongs to the IspD/TarI cytidylyltransferase family. IspD subfamily.

It catalyses the reaction 2-C-methyl-D-erythritol 4-phosphate + CTP + H(+) = 4-CDP-2-C-methyl-D-erythritol + diphosphate. Its pathway is isoprenoid biosynthesis; isopentenyl diphosphate biosynthesis via DXP pathway; isopentenyl diphosphate from 1-deoxy-D-xylulose 5-phosphate: step 2/6. Its function is as follows. Catalyzes the formation of 4-diphosphocytidyl-2-C-methyl-D-erythritol from CTP and 2-C-methyl-D-erythritol 4-phosphate (MEP). This chain is 2-C-methyl-D-erythritol 4-phosphate cytidylyltransferase, found in Nitrosomonas eutropha (strain DSM 101675 / C91 / Nm57).